The chain runs to 1176 residues: Pesticidal crystal protein Cry1Cb (1176 aa).

Belongs to the delta endotoxin family.

Promotes colloidosmotic lysis by binding to the midgut epithelial cells of insects. Toxic to Spodoptera exigua and Trichoplusia ni. In Bacillus thuringiensis subsp. galleriae, this protein is Pesticidal crystal protein Cry1Cb (cry1Cb).